A 262-amino-acid chain; its full sequence is Capsid protein (262 aa).

The segment at 183-262 is disordered; that stretch reads APTIEAITRP…SHHRSPSPRK (80 aa). The Bipartite nuclear localization signal signature appears at 215 to 233; that stretch reads RRRKVKTTVVYGRRRSKSR. Positions 215–234 are enriched in basic residues; the sequence is RRRKVKTTVVYGRRRSKSRD. Ser232, Ser239, and Ser245 each carry phosphoserine; by host. Residues 252–262 are compositionally biased toward basic residues; the sequence is SSHHRSPSPRK. Positions 254-260 are RNA binding; that stretch reads HHRSPSP.

It belongs to the avihepadnavirus core antigen family. Homodimerizes, then multimerizes.

It localises to the virion. It is found in the host cytoplasm. In terms of biological role, self assembles to form an icosahedral capsid. Most capsid appear to be large particles with an icosahedral symmetry of T=4 and consist of 240 copies of capsid protein, though a fraction forms smaller T=3 particles consisting of 180 capsid proteins. Entering capsid are transported along microtubules to the nucleus. Phosphorylation of the capsid is thought to induce exposure of nuclear localization signal in the C-terminal portion of the capsid protein that allows binding to the nuclear pore complex via the importin (karyopherin-) alpha and beta. Capsids are imported in intact form through the nuclear pore into the nuclear basket, where it probably binds NUP153. Only capsids that contain the mature viral genome can release the viral DNA and capsid protein into the nucleoplasm. Immature capsids get stucked in the basket. Capsids encapsulate the pre-genomic RNA and the P protein. Pre-genomic RNA is reverse transcribed into DNA while the capsid is still in the cytoplasm. The capsid can then either be directed to the nucleus, providing more genome for transcription, or bud through the endoplasmic reticulum to provide new virions. The sequence is that of Capsid protein (C) from Anas (ducks).